A 98-amino-acid polypeptide reads, in one-letter code: Small ribosomal subunit protein bS20 (98 aa).

Positions 1–12 (MAPKKTTKKGGP) are enriched in basic residues. A disordered region spans residues 1–20 (MAPKKTTKKGGPQKRPSAEK).

The protein belongs to the bacterial ribosomal protein bS20 family.

In terms of biological role, binds directly to 16S ribosomal RNA. In Chlamydia caviae (strain ATCC VR-813 / DSM 19441 / 03DC25 / GPIC) (Chlamydophila caviae), this protein is Small ribosomal subunit protein bS20.